The following is a 388-amino-acid chain: Succinate--CoA ligase [ADP-forming] subunit beta (388 aa).

Residues 9–244 (KKLFAEYGLP…PSQDDPREAH (236 aa)) form the ATP-grasp domain. Residues lysine 46, 53 to 55 (GRG), glutamate 99, threonine 102, and glutamate 107 each bind ATP. Residues asparagine 199 and aspartate 213 each coordinate Mg(2+). Residues asparagine 264 and 321-323 (GIV) contribute to the substrate site.

The protein belongs to the succinate/malate CoA ligase beta subunit family. Heterotetramer of two alpha and two beta subunits. The cofactor is Mg(2+).

It catalyses the reaction succinate + ATP + CoA = succinyl-CoA + ADP + phosphate. The enzyme catalyses GTP + succinate + CoA = succinyl-CoA + GDP + phosphate. It participates in carbohydrate metabolism; tricarboxylic acid cycle; succinate from succinyl-CoA (ligase route): step 1/1. Its function is as follows. Succinyl-CoA synthetase functions in the citric acid cycle (TCA), coupling the hydrolysis of succinyl-CoA to the synthesis of either ATP or GTP and thus represents the only step of substrate-level phosphorylation in the TCA. The beta subunit provides nucleotide specificity of the enzyme and binds the substrate succinate, while the binding sites for coenzyme A and phosphate are found in the alpha subunit. The sequence is that of Succinate--CoA ligase [ADP-forming] subunit beta from Aeromonas salmonicida (strain A449).